The sequence spans 119 residues: Large ribosomal subunit protein bL20 (119 aa).

This sequence belongs to the bacterial ribosomal protein bL20 family.

Binds directly to 23S ribosomal RNA and is necessary for the in vitro assembly process of the 50S ribosomal subunit. It is not involved in the protein synthesizing functions of that subunit. The chain is Large ribosomal subunit protein bL20 from Xylella fastidiosa (strain 9a5c).